The sequence spans 85 residues: Putative sodium channel toxin Ts37 (85 aa).

An N-terminal signal peptide occupies residues 1–20; sequence MAGEWACLLVSLVLLWGAAG. An LCN-type CS-alpha/beta domain is found at 22–83; sequence RDGFLLDRNF…KIWGDSVRCR (62 aa). Disulfide bonds link C32–C82, C36–C59, C45–C64, and C49–C66.

This sequence belongs to the long (4 C-C) scorpion toxin superfamily. Sodium channel inhibitor family. As to expression, expressed by the venom gland.

Its subcellular location is the secreted. Functionally, putative sodium channel toxin. The polypeptide is Putative sodium channel toxin Ts37 (Tityus serrulatus (Brazilian scorpion)).